The chain runs to 406 residues: uncharacterized protein (406 aa).

The protein resides in the plastid. It is found in the chloroplast. This is an uncharacterized protein from Euglena gracilis.